A 454-amino-acid chain; its full sequence is Aquaporin-7 (454 aa).

Topologically, residues 1 to 71 (MNINEPRDGG…LHLHNKTRNH (71 aa)) are cytoplasmic. A helical membrane pass occupies residues 72-92 (FVATVAEFAGTTLFLFFAFSG). At 93–115 (TQVALLATPANDSNVVGTPSNPA) the chain is on the extracellular side. A glycan (N-linked (GlcNAc...) asparagine) is linked at N103. A helical transmembrane segment spans residues 116–136 (QLLYVSLCFGFSLAVNAWVFF). Residues 137 to 163 (RISGGLFNPAVTMGMCIVGALPYFRGL) are Cytoplasmic-facing. The NPA 1 motif lies at 144 to 146 (NPA). The chain crosses the membrane as a helical span at residues 164–184 (LLIFAQIIGGIAAAAIVSALF). At 185 to 202 (PGPITFRTSLGGGTSIVQ) the chain is on the extracellular side. Residues 203 to 223 (GLFIEMFLTAELVFTIFMLAA) traverse the membrane as a helical segment. Residues 224 to 229 (EKHKGT) lie on the Cytoplasmic side of the membrane. Residues 230 to 250 (FIAPIGIGLSLFIAELTGVYF) traverse the membrane as a helical segment. At 251–274 (TGGSVNPARSFGPSVVSGQFTGYH) the chain is on the extracellular side. Positions 256–258 (NPA) match the NPA 2 motif. A helical transmembrane segment spans residues 275 to 295 (WIYWVGPILGAILASAFYKFI). Topologically, residues 296–454 (KMLEYETANP…ENLRDNTHNN (159 aa)) are cytoplasmic. Positions 343 to 454 (GASHVHENGN…ENLRDNTHNN (112 aa)) are disordered.

Belongs to the MIP/aquaporin (TC 1.A.8) family.

It localises to the membrane. It catalyses the reaction H2O(in) = H2O(out). In terms of biological role, water channel required to facilitate the transport of water across membranes. Involved in conidiation. This chain is Aquaporin-7, found in Botryotinia fuckeliana (strain B05.10) (Noble rot fungus).